The sequence spans 107 residues: Small ribosomal subunit protein bS18 (107 aa).

Belongs to the bacterial ribosomal protein bS18 family. In terms of assembly, part of the 30S ribosomal subunit. Forms a tight heterodimer with protein bS6.

Functionally, binds as a heterodimer with protein bS6 to the central domain of the 16S rRNA, where it helps stabilize the platform of the 30S subunit. This Mycoplasmopsis agalactiae (strain NCTC 10123 / CIP 59.7 / PG2) (Mycoplasma agalactiae) protein is Small ribosomal subunit protein bS18.